The primary structure comprises 716 residues: Polyribonucleotide nucleotidyltransferase (716 aa).

Asp486 and Asp492 together coordinate Mg(2+). The KH domain occupies 553–612; that stretch reads PHIYNIKINPEKIKDVIGKGGAVIRALSDETDTKIDISDDGNITIAALSQKSAAFAQQRI. The region spanning 622–690 is the S1 motif domain; the sequence is GRIYQGTVTR…RQGRIRLSIK (69 aa).

It belongs to the polyribonucleotide nucleotidyltransferase family. As to quaternary structure, component of the RNA degradosome, which is a multiprotein complex involved in RNA processing and mRNA degradation. It depends on Mg(2+) as a cofactor.

It is found in the cytoplasm. It catalyses the reaction RNA(n+1) + phosphate = RNA(n) + a ribonucleoside 5'-diphosphate. Its function is as follows. Involved in mRNA degradation. Catalyzes the phosphorolysis of single-stranded polyribonucleotides processively in the 3'- to 5'-direction. This is Polyribonucleotide nucleotidyltransferase from Hamiltonella defensa subsp. Acyrthosiphon pisum (strain 5AT).